The sequence spans 227 residues: MPEIRQLSEGIFEVTKDKKQLSTLNLDPGKVVYGEKLISVEGDEYRTWDPRRSKLGAMVLKKFDIPLKRNSKVLYLGAASGTTVSHVSDIVSEGAVYSVEFAPRSMRDFIGLASRRKNIFPILADAGKPDSYAHIVEPVDVIFQDVAQPNQAEIAARNAVRFLKKDGYLLLSIKARSIDTAASPKEIFKEEVKKLEQAFEPGFEVLTARELMPYHEDHLGVMARLKK.

Residues 82-83, 100-101, 125-126, and 145-148 contribute to the S-adenosyl-L-methionine site; these read TT, EF, DA, and DVAQ.

Belongs to the methyltransferase superfamily. Fibrillarin family. In terms of assembly, interacts with nop5. Component of box C/D small ribonucleoprotein (sRNP) particles that contain rpl7ae, FlpA and nop5, plus a guide RNA.

Involved in pre-rRNA and tRNA processing. Utilizes the methyl donor S-adenosyl-L-methionine to catalyze the site-specific 2'-hydroxyl methylation of ribose moieties in rRNA and tRNA. Site specificity is provided by a guide RNA that base pairs with the substrate. Methylation occurs at a characteristic distance from the sequence involved in base pairing with the guide RNA. In Methanosarcina mazei (strain ATCC BAA-159 / DSM 3647 / Goe1 / Go1 / JCM 11833 / OCM 88) (Methanosarcina frisia), this protein is Fibrillarin-like rRNA/tRNA 2'-O-methyltransferase.